Consider the following 233-residue polypeptide: Small ribosomal subunit protein uS5 (233 aa).

Polar residues predominate over residues 1–13; it reads MAEETQNTVATES. The segment at 1 to 40 is disordered; that stretch reads MAEETQNTVATESNNEDRKGRRGQRGEGRRGERRNRREEN. The segment covering 15–40 has biased composition (basic and acidic residues); it reads NEDRKGRRGQRGEGRRGERRNRREEN. One can recognise an S5 DRBM domain in the interval 45–108; that stretch reads LLDRVVTINR…LDAKKHMFSV (64 aa).

This sequence belongs to the universal ribosomal protein uS5 family. Part of the 30S ribosomal subunit. Contacts proteins S4 and S8.

In terms of biological role, with S4 and S12 plays an important role in translational accuracy. Functionally, located at the back of the 30S subunit body where it stabilizes the conformation of the head with respect to the body. This is Small ribosomal subunit protein uS5 from Bifidobacterium longum (strain NCC 2705).